Reading from the N-terminus, the 86-residue chain is uncharacterized protein (86 aa).

This is an uncharacterized protein from Vaccinia virus (strain Copenhagen) (VACV).